A 118-amino-acid chain; its full sequence is Large ribosomal subunit protein bL20 (118 aa).

It belongs to the bacterial ribosomal protein bL20 family.

Binds directly to 23S ribosomal RNA and is necessary for the in vitro assembly process of the 50S ribosomal subunit. It is not involved in the protein synthesizing functions of that subunit. The polypeptide is Large ribosomal subunit protein bL20 (Ectopseudomonas mendocina (strain ymp) (Pseudomonas mendocina)).